The sequence spans 260 residues: 3'-5' ssDNA/RNA exonuclease TatD (260 aa).

Positions 91, 127, and 152 each coordinate a divalent metal cation.

It belongs to the metallo-dependent hydrolases superfamily. TatD-type hydrolase family. TatD subfamily. As to quaternary structure, monomer. The cofactor is Mg(2+). Mn(2+) is required as a cofactor.

It localises to the cytoplasm. Functionally, 3'-5' exonuclease that prefers single-stranded DNA and RNA. May play a role in the H(2)O(2)-induced DNA damage repair. In Escherichia coli (strain K12), this protein is 3'-5' ssDNA/RNA exonuclease TatD.